We begin with the raw amino-acid sequence, 456 residues long: Histidine--tRNA ligase (456 aa).

This sequence belongs to the class-II aminoacyl-tRNA synthetase family. In terms of assembly, homodimer.

It is found in the cytoplasm. It catalyses the reaction tRNA(His) + L-histidine + ATP = L-histidyl-tRNA(His) + AMP + diphosphate + H(+). The chain is Histidine--tRNA ligase from Cupriavidus taiwanensis (strain DSM 17343 / BCRC 17206 / CCUG 44338 / CIP 107171 / LMG 19424 / R1) (Ralstonia taiwanensis (strain LMG 19424)).